We begin with the raw amino-acid sequence, 218 residues long: Large ribosomal subunit protein uL3 (218 aa).

A disordered region spans residues 127 to 167; sequence GFSRGPMSHGSKNHREPGSTGAGTTPGRIYPGKRMAGRYGG.

Belongs to the universal ribosomal protein uL3 family. In terms of assembly, part of the 50S ribosomal subunit. Forms a cluster with proteins L14 and L19.

In terms of biological role, one of the primary rRNA binding proteins, it binds directly near the 3'-end of the 23S rRNA, where it nucleates assembly of the 50S subunit. The protein is Large ribosomal subunit protein uL3 of Prochlorococcus marinus (strain MIT 9303).